Consider the following 485-residue polypeptide: tRNA sulfurtransferase (485 aa).

A THUMP domain is found at 63–167 (DKLVERLSCM…NELLYLVTAI (105 aa)). ATP-binding positions include 185 to 186 (LI), lysine 267, glycine 289, and glutamine 298. A disulfide bridge connects residues cysteine 346 and cysteine 458. One can recognise a Rhodanese domain in the interval 406-485 (LAENEVILDI…FNNIKVYRQN (80 aa)). Cysteine 458 (cysteine persulfide intermediate) is an active-site residue.

Belongs to the ThiI family.

The protein localises to the cytoplasm. It catalyses the reaction [ThiI sulfur-carrier protein]-S-sulfanyl-L-cysteine + a uridine in tRNA + 2 reduced [2Fe-2S]-[ferredoxin] + ATP + H(+) = [ThiI sulfur-carrier protein]-L-cysteine + a 4-thiouridine in tRNA + 2 oxidized [2Fe-2S]-[ferredoxin] + AMP + diphosphate. The catalysed reaction is [ThiS sulfur-carrier protein]-C-terminal Gly-Gly-AMP + S-sulfanyl-L-cysteinyl-[cysteine desulfurase] + AH2 = [ThiS sulfur-carrier protein]-C-terminal-Gly-aminoethanethioate + L-cysteinyl-[cysteine desulfurase] + A + AMP + 2 H(+). Its pathway is cofactor biosynthesis; thiamine diphosphate biosynthesis. Functionally, catalyzes the ATP-dependent transfer of a sulfur to tRNA to produce 4-thiouridine in position 8 of tRNAs, which functions as a near-UV photosensor. Also catalyzes the transfer of sulfur to the sulfur carrier protein ThiS, forming ThiS-thiocarboxylate. This is a step in the synthesis of thiazole, in the thiamine biosynthesis pathway. The sulfur is donated as persulfide by IscS. This Tolumonas auensis (strain DSM 9187 / NBRC 110442 / TA 4) protein is tRNA sulfurtransferase.